A 549-amino-acid chain; its full sequence is uncharacterized protein (549 aa).

The next 12 helical transmembrane spans lie at 27 to 47 (ILRF…YVFV), 108 to 128 (PIVV…GVIF), 146 to 166 (TGLV…LAIA), 197 to 217 (AVAI…IPML), 233 to 253 (FIAI…FLLV), 265 to 285 (VAAI…LISL), 308 to 328 (FLVI…LSIL), 352 to 372 (LVLL…IFGV), 399 to 419 (TLLV…VGLG), 434 to 454 (LMLA…VAIG), 472 to 492 (IVSL…FQAI), and 501 to 521 (IFIW…VLIG).

Its subcellular location is the cell membrane. This is an uncharacterized protein from Mycoplasma pneumoniae (strain ATCC 29342 / M129 / Subtype 1) (Mycoplasmoides pneumoniae).